Consider the following 156-residue polypeptide: Large ribosomal subunit protein uL22 (156 aa).

Belongs to the universal ribosomal protein uL22 family. In terms of assembly, part of the 50S ribosomal subunit.

In terms of biological role, this protein binds specifically to 23S rRNA. It makes multiple contacts with different domains of the 23S rRNA in the assembled 50S subunit and ribosome. Its function is as follows. The globular domain of the protein is located near the polypeptide exit tunnel on the outside of the subunit, while an extended beta-hairpin is found that lines the wall of the exit tunnel in the center of the 70S ribosome. This chain is Large ribosomal subunit protein uL22, found in Sulfurisphaera tokodaii (strain DSM 16993 / JCM 10545 / NBRC 100140 / 7) (Sulfolobus tokodaii).